Consider the following 292-residue polypeptide: 3-methyl-2-oxobutanoate hydroxymethyltransferase 2 (292 aa).

2 residues coordinate Mg(2+): Asp52 and Asp91. 3-methyl-2-oxobutanoate-binding positions include 52-53 (DS), Asp91, and Lys120. Position 122 (Glu122) interacts with Mg(2+). Glu189 serves as the catalytic Proton acceptor.

This sequence belongs to the PanB family. Homodecamer; pentamer of dimers. Mg(2+) is required as a cofactor.

It localises to the cytoplasm. It catalyses the reaction 3-methyl-2-oxobutanoate + (6R)-5,10-methylene-5,6,7,8-tetrahydrofolate + H2O = 2-dehydropantoate + (6S)-5,6,7,8-tetrahydrofolate. It functions in the pathway cofactor biosynthesis; (R)-pantothenate biosynthesis; (R)-pantoate from 3-methyl-2-oxobutanoate: step 1/2. Functionally, catalyzes the reversible reaction in which hydroxymethyl group from 5,10-methylenetetrahydrofolate is transferred onto alpha-ketoisovalerate to form ketopantoate. The protein is 3-methyl-2-oxobutanoate hydroxymethyltransferase 2 of Bradyrhizobium diazoefficiens (strain JCM 10833 / BCRC 13528 / IAM 13628 / NBRC 14792 / USDA 110).